The sequence spans 149 residues: Low molecular weight protein-tyrosine-phosphatase Wzb (149 aa).

The active-site Nucleophile is the Cys-9. The active site involves Arg-15. The active-site Proton donor is the Asp-115.

Belongs to the low molecular weight phosphotyrosine protein phosphatase family.

The enzyme catalyses O-phospho-L-tyrosyl-[protein] + H2O = L-tyrosyl-[protein] + phosphate. The protein operates within glycan metabolism; exopolysaccharide biosynthesis. Dephosphorylates Wzc. Required for the extracellular polysaccharide colanic acid synthesis. Probably involved in the export of colanic acid from the cell to medium. Involved in protection of cells against contact-dependent growth inhibition (CDI). In Salmonella typhimurium (strain LT2 / SGSC1412 / ATCC 700720), this protein is Low molecular weight protein-tyrosine-phosphatase Wzb (wzb).